A 236-amino-acid chain; its full sequence is Cancer/testis antigen 55 (236 aa).

The segment at 57–84 is disordered; the sequence is RSSADVETGDNPLKAEPNLPAAVEEQSP.

As to quaternary structure, interacts with GABARAP; this interaction may be important for GABARAP protein stability. Interacts with LAMP2; this interaction may be important for LAMP2 protein stability. Expressed in spermatozoa (at protein level).

It localises to the cytoplasm. It is found in the cytoplasmic vesicle. The protein resides in the secretory vesicle. Its subcellular location is the acrosome. The protein localises to the cell projection. It localises to the cilium. It is found in the flagellum. Functionally, plays a role in spermatogenesis, possibly acting in the regulation of the autophagy pathway. In Mus musculus (Mouse), this protein is Cancer/testis antigen 55 (Ct55).